The sequence spans 343 residues: MKKSDFNYNLPAELIAQAPLAERSASRLLLVPPAPDAFTDLQVRDLPSLLQPGDLLVFNDTRVIPARLFGQKASGGRVEILIERLLGGQQARAQVGASKSPKAGSRIALDAGGEAEVLGRDGEFYVLQFHVPESLEQWLLHAGRLPLPPYIQREPGMDDRERYQTVFAREVGAVAAPTAGLHFDEPLLAALKDKGVDFGHVTLHVGAGTFQPVRADDLKDHVMHREWLNVGAELVQQVRRTRAAGGRVIGVGTTVVRALESAMRDGELLPFAGETQIFITPGYRIRSVDAMVTNFHLPESTLLMMISAFAGKERVFEAYQHAIAQRYRFFSYGDAMLLFPQAG.

Belongs to the QueA family. Monomer.

The protein localises to the cytoplasm. The catalysed reaction is 7-aminomethyl-7-carbaguanosine(34) in tRNA + S-adenosyl-L-methionine = epoxyqueuosine(34) in tRNA + adenine + L-methionine + 2 H(+). The protein operates within tRNA modification; tRNA-queuosine biosynthesis. In terms of biological role, transfers and isomerizes the ribose moiety from AdoMet to the 7-aminomethyl group of 7-deazaguanine (preQ1-tRNA) to give epoxyqueuosine (oQ-tRNA). The protein is S-adenosylmethionine:tRNA ribosyltransferase-isomerase of Stenotrophomonas maltophilia (strain R551-3).